The primary structure comprises 41 residues: Photosystem II reaction center protein L (41 aa).

Residues Leu-20–Thr-40 traverse the membrane as a helical segment.

This sequence belongs to the PsbL family. In terms of assembly, PSII is composed of 1 copy each of membrane proteins PsbA, PsbB, PsbC, PsbD, PsbE, PsbF, PsbH, PsbI, PsbJ, PsbK, PsbL, PsbM, PsbT, PsbX, PsbY, PsbZ, Psb30/Ycf12, peripheral proteins PsbO, CyanoQ (PsbQ), PsbU, PsbV and a large number of cofactors. It forms dimeric complexes.

The protein localises to the cellular thylakoid membrane. One of the components of the core complex of photosystem II (PSII). PSII is a light-driven water:plastoquinone oxidoreductase that uses light energy to abstract electrons from H(2)O, generating O(2) and a proton gradient subsequently used for ATP formation. It consists of a core antenna complex that captures photons, and an electron transfer chain that converts photonic excitation into a charge separation. This subunit is found at the monomer-monomer interface and is required for correct PSII assembly and/or dimerization. This chain is Photosystem II reaction center protein L, found in Synechococcus sp. (strain ATCC 27144 / PCC 6301 / SAUG 1402/1) (Anacystis nidulans).